Here is a 412-residue protein sequence, read N- to C-terminus: D-amino acid dehydrogenase 3 (412 aa).

4 to 18 (IVVIGAGIAGVSTAY) serves as a coordination point for FAD.

The protein belongs to the DadA oxidoreductase family. FAD serves as cofactor.

The enzyme catalyses a D-alpha-amino acid + A + H2O = a 2-oxocarboxylate + AH2 + NH4(+). Oxidative deamination of D-amino acids. This is D-amino acid dehydrogenase 3 (dadA3) from Mesorhizobium japonicum (strain LMG 29417 / CECT 9101 / MAFF 303099) (Mesorhizobium loti (strain MAFF 303099)).